A 425-amino-acid polypeptide reads, in one-letter code: Oxalate decarboxylase ARB_02208 (425 aa).

The first 19 residues, 1–19 (MKFGSALVAAVAAVAGVAA), serve as a signal peptide directing secretion. One can recognise a Cupin type-1 1 domain in the interval 73-236 (FSLSKTRMFH…FNISTGGTFD (164 aa)). Histidine 116, histidine 118, glutamate 122, and histidine 161 together coordinate Mn(2+). N-linked (GlcNAc...) asparagine glycosylation is found at asparagine 228, asparagine 247, asparagine 254, and asparagine 265. Positions 270–414 (FHIRDAPEIQ…AINVPIDVID (145 aa)) constitute a Cupin type-1 2 domain. Mn(2+) is bound by residues histidine 317, histidine 319, glutamate 324, and histidine 363. Asparagine 367 is a glycosylation site (N-linked (GlcNAc...) asparagine). Glutamate 378 acts as the Proton donor in catalysis.

Requires Mn(2+) as cofactor.

It localises to the secreted. It carries out the reaction oxalate + H(+) = formate + CO2. Converts oxalate to formate and CO(2) in an O(2)-dependent reaction. Can also catalyze minor side reactions: oxalate oxidation to produce H(2)O(2), and oxalate-dependent, H(2)O(2)-independent dye oxidations. This Arthroderma benhamiae (strain ATCC MYA-4681 / CBS 112371) (Trichophyton mentagrophytes) protein is Oxalate decarboxylase ARB_02208.